The primary structure comprises 343 residues: Anthranilate phosphoribosyltransferase (343 aa).

5-phospho-alpha-D-ribose 1-diphosphate is bound by residues glycine 86, 89 to 90 (GD), threonine 94, 96 to 99 (NIST), 114 to 122 (KHGNRSASG), and serine 126. Glycine 86 contributes to the anthranilate binding site. Serine 98 contributes to the Mg(2+) binding site. Residue asparagine 117 participates in anthranilate binding. Arginine 172 lines the anthranilate pocket. The Mg(2+) site is built by aspartate 231 and glutamate 232.

Belongs to the anthranilate phosphoribosyltransferase family. In terms of assembly, homodimer. It depends on Mg(2+) as a cofactor.

It carries out the reaction N-(5-phospho-beta-D-ribosyl)anthranilate + diphosphate = 5-phospho-alpha-D-ribose 1-diphosphate + anthranilate. Its pathway is amino-acid biosynthesis; L-tryptophan biosynthesis; L-tryptophan from chorismate: step 2/5. In terms of biological role, catalyzes the transfer of the phosphoribosyl group of 5-phosphorylribose-1-pyrophosphate (PRPP) to anthranilate to yield N-(5'-phosphoribosyl)-anthranilate (PRA). The chain is Anthranilate phosphoribosyltransferase from Synechococcus sp. (strain JA-2-3B'a(2-13)) (Cyanobacteria bacterium Yellowstone B-Prime).